We begin with the raw amino-acid sequence, 287 residues long: Probable endonuclease 4 (287 aa).

His69, His109, Glu146, Asp180, His183, His217, Asp230, His232, and Glu262 together coordinate Zn(2+).

The protein belongs to the AP endonuclease 2 family. The cofactor is Zn(2+).

The catalysed reaction is Endonucleolytic cleavage to 5'-phosphooligonucleotide end-products.. Endonuclease IV plays a role in DNA repair. It cleaves phosphodiester bonds at apurinic or apyrimidinic (AP) sites, generating a 3'-hydroxyl group and a 5'-terminal sugar phosphate. The protein is Probable endonuclease 4 of Petrotoga mobilis (strain DSM 10674 / SJ95).